Here is a 287-residue protein sequence, read N- to C-terminus: Nucleotide-binding protein Pmob_0154 (287 aa).

15–22 provides a ligand contact to ATP; it reads GLSGAGKT. 64 to 67 contributes to the GTP binding site; that stretch reads DIRW.

It belongs to the RapZ-like family.

In terms of biological role, displays ATPase and GTPase activities. The polypeptide is Nucleotide-binding protein Pmob_0154 (Petrotoga mobilis (strain DSM 10674 / SJ95)).